The sequence spans 156 residues: ATP synthase subunit b', organellar chromatophore (156 aa).

A helical membrane pass occupies residues 23 to 43 (TLPLMAIQVVFLTFILNAIFF).

It belongs to the ATPase B chain family. In terms of assembly, F-type ATPases have 2 components, F(1) - the catalytic core - and F(0) - the membrane proton channel. F(1) has five subunits: alpha(3), beta(3), gamma(1), delta(1), epsilon(1). F(0) has four main subunits: a(1), b(1), b'(1) and c(10-14). The alpha and beta chains form an alternating ring which encloses part of the gamma chain. F(1) is attached to F(0) by a central stalk formed by the gamma and epsilon chains, while a peripheral stalk is formed by the delta, b and b' chains.

The protein localises to the plastid. The protein resides in the organellar chromatophore thylakoid membrane. F(1)F(0) ATP synthase produces ATP from ADP in the presence of a proton or sodium gradient. F-type ATPases consist of two structural domains, F(1) containing the extramembraneous catalytic core and F(0) containing the membrane proton channel, linked together by a central stalk and a peripheral stalk. During catalysis, ATP synthesis in the catalytic domain of F(1) is coupled via a rotary mechanism of the central stalk subunits to proton translocation. In terms of biological role, component of the F(0) channel, it forms part of the peripheral stalk, linking F(1) to F(0). The b'-subunit is a diverged and duplicated form of b found in plants and photosynthetic bacteria. In Paulinella chromatophora, this protein is ATP synthase subunit b', organellar chromatophore.